A 604-amino-acid chain; its full sequence is Elongation factor 4 (604 aa).

The region spanning 7–189 (SRLRNFCIIA…AVVDRIPPPA (183 aa)) is the tr-type G domain. GTP is bound by residues 19–24 (DHGKST) and 136–139 (NKID).

It belongs to the TRAFAC class translation factor GTPase superfamily. Classic translation factor GTPase family. LepA subfamily.

It is found in the cell inner membrane. The enzyme catalyses GTP + H2O = GDP + phosphate + H(+). Its function is as follows. Required for accurate and efficient protein synthesis under certain stress conditions. May act as a fidelity factor of the translation reaction, by catalyzing a one-codon backward translocation of tRNAs on improperly translocated ribosomes. Back-translocation proceeds from a post-translocation (POST) complex to a pre-translocation (PRE) complex, thus giving elongation factor G a second chance to translocate the tRNAs correctly. Binds to ribosomes in a GTP-dependent manner. The chain is Elongation factor 4 from Prochlorococcus marinus (strain MIT 9313).